The chain runs to 396 residues: 1-deoxy-D-xylulose 5-phosphate reductoisomerase (396 aa).

5 residues coordinate NADPH: Thr-13, Gly-14, Ser-15, Val-16, and Asn-127. Residue Lys-128 coordinates 1-deoxy-D-xylulose 5-phosphate. Glu-129 is a binding site for NADPH. Asp-153 is a binding site for Mn(2+). Positions 154, 155, 184, and 207 each coordinate 1-deoxy-D-xylulose 5-phosphate. Glu-155 serves as a coordination point for Mn(2+). Residue Gly-213 participates in NADPH binding. Residues Ser-220, Asn-225, Lys-226, and Glu-229 each coordinate 1-deoxy-D-xylulose 5-phosphate. Glu-229 lines the Mn(2+) pocket.

The protein belongs to the DXR family. The cofactor is Mg(2+). It depends on Mn(2+) as a cofactor.

The catalysed reaction is 2-C-methyl-D-erythritol 4-phosphate + NADP(+) = 1-deoxy-D-xylulose 5-phosphate + NADPH + H(+). The protein operates within isoprenoid biosynthesis; isopentenyl diphosphate biosynthesis via DXP pathway; isopentenyl diphosphate from 1-deoxy-D-xylulose 5-phosphate: step 1/6. Its function is as follows. Catalyzes the NADPH-dependent rearrangement and reduction of 1-deoxy-D-xylulose-5-phosphate (DXP) to 2-C-methyl-D-erythritol 4-phosphate (MEP). The protein is 1-deoxy-D-xylulose 5-phosphate reductoisomerase of Pseudomonas fluorescens (strain SBW25).